The primary structure comprises 264 residues: 3-methyl-2-oxobutanoate hydroxymethyltransferase (264 aa).

Mg(2+)-binding residues include Asp-45 and Asp-84. 3-methyl-2-oxobutanoate-binding positions include 45–46 (DS), Asp-84, and Lys-112. Glu-114 contributes to the Mg(2+) binding site. Glu-181 (proton acceptor) is an active-site residue.

The protein belongs to the PanB family. In terms of assembly, homodecamer; pentamer of dimers. Mg(2+) serves as cofactor.

It is found in the cytoplasm. It catalyses the reaction 3-methyl-2-oxobutanoate + (6R)-5,10-methylene-5,6,7,8-tetrahydrofolate + H2O = 2-dehydropantoate + (6S)-5,6,7,8-tetrahydrofolate. It functions in the pathway cofactor biosynthesis; (R)-pantothenate biosynthesis; (R)-pantoate from 3-methyl-2-oxobutanoate: step 1/2. In terms of biological role, catalyzes the reversible reaction in which hydroxymethyl group from 5,10-methylenetetrahydrofolate is transferred onto alpha-ketoisovalerate to form ketopantoate. This is 3-methyl-2-oxobutanoate hydroxymethyltransferase from Aliivibrio fischeri (strain MJ11) (Vibrio fischeri).